Reading from the N-terminus, the 115-residue chain is Large ribosomal subunit protein uL18 (115 aa).

This sequence belongs to the universal ribosomal protein uL18 family. Part of the 50S ribosomal subunit; part of the 5S rRNA/L5/L18/L25 subcomplex. Contacts the 5S and 23S rRNAs.

In terms of biological role, this is one of the proteins that bind and probably mediate the attachment of the 5S RNA into the large ribosomal subunit, where it forms part of the central protuberance. This Baumannia cicadellinicola subsp. Homalodisca coagulata protein is Large ribosomal subunit protein uL18.